A 206-amino-acid chain; its full sequence is Large ribosomal subunit protein uL4 (206 aa).

This sequence belongs to the universal ribosomal protein uL4 family. Part of the 50S ribosomal subunit.

Functionally, one of the primary rRNA binding proteins, this protein initially binds near the 5'-end of the 23S rRNA. It is important during the early stages of 50S assembly. It makes multiple contacts with different domains of the 23S rRNA in the assembled 50S subunit and ribosome. Forms part of the polypeptide exit tunnel. The chain is Large ribosomal subunit protein uL4 from Cereibacter sphaeroides (strain ATCC 17025 / ATH 2.4.3) (Rhodobacter sphaeroides).